Consider the following 368-residue polypeptide: MNKTITALAILMASFAANASVLPETPVPFKSGTGVIDNDTVYIGLGSAGTAWYKLDTQAKDKRWTALAAFPGGPRDQATSAFIDGNLYVFGGIGKNSEGLTQVFNDVHKYNPKTNSWVKLMSHAPMGMAGHVTFVHNGKAYVTGGVNQNIFNGYFEDLNEAGKDSTAIDKINAYYFDKKAEDYFFNKFLLSFDPSTQQWSYAGESPWYGTAGAAVVNKGDKTWLINGEAKPGLRTDAVFELDFTGNNLKWNKLAPVASPDGVAGGFAGMSNDSLIFAGGAGFKGSRENYQNGKNYAHEGLKKSYSADIHLWHNGKWDKSGELSQGRAYGVSLLWNNSLLIIGGEAAGGKAVTDSVLISVKDNKVTVQN.

Positions 1-19 are cleaved as a signal peptide; the sequence is MNKTITALAILMASFAANA. Kelch repeat units lie at residues 40 to 84, 86 to 137, 139 to 173, 174 to 219, 222 to 265, 287 to 336, and 338 to 367; these read TVYI…AFID, NLYV…FVHN, KAYV…KINA, YYFD…VNKG, TWLI…VAGG, ENYQ…LWNN, and LLII…VTVQ. Catalysis depends on glutamate 228, which acts as the Proton acceptor.

It belongs to the NanM family. As to quaternary structure, homodimer.

The protein localises to the periplasm. The catalysed reaction is N-acetyl-alpha-neuraminate = N-acetyl-beta-neuraminate. Functionally, converts alpha-N-acetylneuranimic acid (Neu5Ac) to the beta-anomer, accelerating the equilibrium between the alpha- and beta-anomers. Probably facilitates sialidase-negative bacteria to compete successfully for limited amounts of extracellular Neu5Ac, which is likely taken up in the beta-anomer. In addition, the rapid removal of sialic acid from solution might be advantageous to the bacterium to damp down host responses. The polypeptide is N-acetylneuraminate epimerase 2 (Escherichia coli O6:H1 (strain CFT073 / ATCC 700928 / UPEC)).